The following is a 403-amino-acid chain: Probable tRNA sulfurtransferase (403 aa).

The THUMP domain maps to 60–165; sequence QLAEERLKPI…KEGVFLSCRT (106 aa). ATP contacts are provided by residues 183-184, 208-209, Arg-265, Gly-287, and Gln-296; these read ML and HF.

It belongs to the ThiI family.

The protein resides in the cytoplasm. The catalysed reaction is [ThiI sulfur-carrier protein]-S-sulfanyl-L-cysteine + a uridine in tRNA + 2 reduced [2Fe-2S]-[ferredoxin] + ATP + H(+) = [ThiI sulfur-carrier protein]-L-cysteine + a 4-thiouridine in tRNA + 2 oxidized [2Fe-2S]-[ferredoxin] + AMP + diphosphate. It carries out the reaction [ThiS sulfur-carrier protein]-C-terminal Gly-Gly-AMP + S-sulfanyl-L-cysteinyl-[cysteine desulfurase] + AH2 = [ThiS sulfur-carrier protein]-C-terminal-Gly-aminoethanethioate + L-cysteinyl-[cysteine desulfurase] + A + AMP + 2 H(+). Its pathway is cofactor biosynthesis; thiamine diphosphate biosynthesis. In terms of biological role, catalyzes the ATP-dependent transfer of a sulfur to tRNA to produce 4-thiouridine in position 8 of tRNAs, which functions as a near-UV photosensor. Also catalyzes the transfer of sulfur to the sulfur carrier protein ThiS, forming ThiS-thiocarboxylate. This is a step in the synthesis of thiazole, in the thiamine biosynthesis pathway. The sulfur is donated as persulfide by IscS. This is Probable tRNA sulfurtransferase from Listeria monocytogenes serovar 1/2a (strain ATCC BAA-679 / EGD-e).